The sequence spans 109 residues: MVWKRTISAKALEKAKSAAVKVEDKVVFIANIKGTLYAMDAVCSHARCILDQLDEEKLTVKCYCHQALFDLRSGKMLEPPYVAPDAPKEKLGLKTYQIRDNGGWIEVDV.

One can recognise a Rieske domain in the interval 3 to 107; the sequence is WKRTISAKAL…IRDNGGWIEV (105 aa). [2Fe-2S] cluster contacts are provided by Cys-43, His-45, Cys-62, and His-65.

It belongs to the SDX family. The cofactor is [2Fe-2S] cluster.

The protein localises to the cytoplasm. In Saccharolobus solfataricus (strain ATCC 35092 / DSM 1617 / JCM 11322 / P2) (Sulfolobus solfataricus), this protein is Probable sulredoxin (sdx).